The following is a 487-amino-acid chain: N-succinylglutamate 5-semialdehyde dehydrogenase (487 aa).

Residue 221-226 coordinates NAD(+); the sequence is GSSRTG. Residues glutamate 244 and cysteine 278 contribute to the active site.

Belongs to the aldehyde dehydrogenase family. AstD subfamily.

It catalyses the reaction N-succinyl-L-glutamate 5-semialdehyde + NAD(+) + H2O = N-succinyl-L-glutamate + NADH + 2 H(+). The protein operates within amino-acid degradation; L-arginine degradation via AST pathway; L-glutamate and succinate from L-arginine: step 4/5. Catalyzes the NAD-dependent reduction of succinylglutamate semialdehyde into succinylglutamate. The polypeptide is N-succinylglutamate 5-semialdehyde dehydrogenase (Ectopseudomonas mendocina (strain ymp) (Pseudomonas mendocina)).